The chain runs to 314 residues: Protoheme IX farnesyltransferase (314 aa).

Helical transmembrane passes span 58 to 78, 107 to 127, 130 to 150, 173 to 193, 227 to 247, 248 to 268, and 294 to 314; these read LWLV…ASVF, AALV…YVWV, LSAA…TMLL, WTAV…VVFF, VGRQ…LLWP, VAGT…VFLL, and SSNL…LLAG.

The protein belongs to the UbiA prenyltransferase family. Protoheme IX farnesyltransferase subfamily.

The protein localises to the cell membrane. It catalyses the reaction heme b + (2E,6E)-farnesyl diphosphate + H2O = Fe(II)-heme o + diphosphate. The protein operates within porphyrin-containing compound metabolism; heme O biosynthesis; heme O from protoheme: step 1/1. In terms of biological role, converts heme B (protoheme IX) to heme O by substitution of the vinyl group on carbon 2 of heme B porphyrin ring with a hydroxyethyl farnesyl side group. The polypeptide is Protoheme IX farnesyltransferase (Nocardioides sp. (strain ATCC BAA-499 / JS614)).